Consider the following 390-residue polypeptide: Guanine nucleotide exchange factor for Rab-3A (390 aa).

Positions 1 to 60 are disordered; sequence MWSGQPHPDEGHPPPLEAVPVPWKSVGPCKSHRESLGGLPETPAGEEAQGEEGPAATQLD. Over residues 40-58 the composition is skewed to low complexity; sequence PETPAGEEAQGEEGPAATQ. Residues 73 to 161 are a coiled coil; that stretch reads EKGSEFLKEE…AEVTALKTLV (89 aa). Residues 166 to 194 form a disordered region; that stretch reads PASPNRELHPQLLSPTKAGPRKGHLRHKS. S168 and S179 each carry phosphoserine. Over residues 184 to 194 the composition is skewed to basic residues; sequence GPRKGHLRHKS.

Belongs to the SEC2 family. Interacts with RAB3A and IHPK1 through the coiled-coil domain. This interaction is competitive. IHPK1 kinase activity is not required for this interaction.

In terms of biological role, guanine nucleotide exchange factor (GEF) which may activate RAB3A, a GTPase that regulates synaptic vesicle exocytosis. Promotes the exchange of GDP to GTP, converting inactive GDP-bound Rab proteins into their active GTP-bound form. May also activate RAB8A and RAB8B. The sequence is that of Guanine nucleotide exchange factor for Rab-3A (RAB3IL1) from Bos taurus (Bovine).